The primary structure comprises 1011 residues: Cell division cycle-associated protein 2 (1011 aa).

A compositionally biased stretch (polar residues) spans 1–22 (MDTCSQESEPLQTKESPINNAG). Positions 1-26 (MDTCSQESEPLQTKESPINNAGKTPL) are disordered. Phosphoserine is present on residues serine 125, serine 130, serine 209, serine 293, and serine 310. Threonine 313 carries the phosphothreonine modification. A PP1-binding domain is found at 380-440 (KRKRVTFGED…PEWLPQPNFD (61 aa)). 2 positions are modified to phosphoserine: serine 391 and serine 398. Disordered stretches follow at residues 395-438 (LDES…PQPN) and 522-544 (PCKE…KVLP). Position 403 is a phosphothreonine (threonine 403). Residues 418-431 (SSLSPPLLEQSPVP) are compositionally biased toward low complexity. Residue serine 428 is modified to Phosphoserine. Residues 522–543 (PCKEKKTNRRKSQESKHADKVL) are compositionally biased toward basic and acidic residues. Residues serine 583, serine 702, and serine 747 each carry the phosphoserine modification. A Glycyl lysine isopeptide (Lys-Gly) (interchain with G-Cter in SUMO2) cross-link involves residue lysine 753. A compositionally biased stretch (basic and acidic residues) spans 790 to 803 (DQRKVSKSQGEDLG). 2 disordered regions span residues 790 to 835 (DQRK…GLHL) and 896 to 1011 (GLVW…LSEN). Polar residues predominate over residues 931 to 945 (SSRQDPCTLPSTSSE). Serine 967 carries the phosphoserine modification. The segment covering 968 to 983 (FCTSTLANPKSTTQSR) has biased composition (polar residues). The segment covering 993–1011 (QKRENTLQETSRESDLSEN) has biased composition (basic and acidic residues).

As to quaternary structure, interacts with PPP1CC. Phosphorylated by CDK1. May regulate its subcellular location.

It localises to the nucleus. Regulator of chromosome structure during mitosis required for condensin-depleted chromosomes to retain their compact architecture through anaphase. Acts by mediating the recruitment of phopsphatase PP1-gamma subunit (PPP1CC) to chromatin at anaphase and into the following interphase. At anaphase onset, its association with chromatin targets a pool of PPP1CC to dephosphorylate substrates. The polypeptide is Cell division cycle-associated protein 2 (CDCA2) (Bos taurus (Bovine)).